The following is a 143-amino-acid chain: MKNNSAQKIIDSIKQILSIYKIDFDPSFGAVLTDDNDLDYQMLIEKTQEKIQELDKRSQEILQQTGMTREQMEVFANNPDNFSPEEWRALETIRSSCNEYKKETEELIKEVTQDISHTSGKSPTPKAKSSSPKKSKKKNWIPL.

Residues 111–143 (VTQDISHTSGKSPTPKAKSSSPKKSKKKNWIPL) form a disordered region. Over residues 119–130 (SGKSPTPKAKSS) the composition is skewed to low complexity. Basic residues predominate over residues 131–143 (SPKKSKKKNWIPL).

It belongs to the chlamydial CPn_0742/CT_635/TC_0003 family.

This is an uncharacterized protein from Chlamydia muridarum (strain MoPn / Nigg).